A 196-amino-acid chain; its full sequence is Protein TEX261 (196 aa).

5 helical membrane passes run 3–23 (FMYV…TLAV), 42–62 (SRII…LYVF), 70–90 (IGVG…FPFI), 97–117 (FILS…FFAE), and 125–145 (VLAY…VSLS).

The protein belongs to the SVP26 family. Detected in testis.

The protein resides in the membrane. The polypeptide is Protein TEX261 (Tex261) (Mus musculus (Mouse)).